The primary structure comprises 1381 residues: DNA-directed RNA polymerase subunit beta (1381 aa).

The protein belongs to the RNA polymerase beta chain family. The RNAP catalytic core consists of 2 alpha, 1 beta, 1 beta' and 1 omega subunit. When a sigma factor is associated with the core the holoenzyme is formed, which can initiate transcription.

It catalyses the reaction RNA(n) + a ribonucleoside 5'-triphosphate = RNA(n+1) + diphosphate. Functionally, DNA-dependent RNA polymerase catalyzes the transcription of DNA into RNA using the four ribonucleoside triphosphates as substrates. The chain is DNA-directed RNA polymerase subunit beta from Halorhodospira halophila (strain DSM 244 / SL1) (Ectothiorhodospira halophila (strain DSM 244 / SL1)).